A 157-amino-acid polypeptide reads, in one-letter code: MSYRSLSFIPNFNDHNVFSNRFNQIDKMFSTLTGEKPISDTPTYNLCQINEIEYQLTLSIPGYQEKELDISVHNNQLSIQGKKENSDTQECNKWLHKGIVFNNFSLNFNLDHKIKVKKAELSLGLLKLDFECNIPEEEKPKKISINVPNDTKKIDKK.

Positions 35–148 (EKPISDTPTY…KPKKISINVP (114 aa)) constitute a sHSP domain.

It belongs to the small heat shock protein (HSP20) family.

The protein is Small heat shock protein ibp (ibp) of Buchnera aphidicola subsp. Acyrthosiphon pisum (strain APS) (Acyrthosiphon pisum symbiotic bacterium).